The sequence spans 97 residues: Small ribosomal subunit protein uS19 (97 aa).

The protein belongs to the universal ribosomal protein uS19 family.

Protein S19 forms a complex with S13 that binds strongly to the 16S ribosomal RNA. This is Small ribosomal subunit protein uS19 from Pelagibacter ubique (strain HTCC1062).